Reading from the N-terminus, the 206-residue chain is Large ribosomal subunit protein uL4 (206 aa).

Basic residues predominate over residues 65–76 (KQKGTGRARHSS). Residues 65-94 (KQKGTGRARHSSARAPQFRGGGKAHGPVVR) form a disordered region.

This sequence belongs to the universal ribosomal protein uL4 family. As to quaternary structure, part of the 50S ribosomal subunit.

Its function is as follows. One of the primary rRNA binding proteins, this protein initially binds near the 5'-end of the 23S rRNA. It is important during the early stages of 50S assembly. It makes multiple contacts with different domains of the 23S rRNA in the assembled 50S subunit and ribosome. Functionally, forms part of the polypeptide exit tunnel. The sequence is that of Large ribosomal subunit protein uL4 from Bartonella quintana (strain Toulouse) (Rochalimaea quintana).